Consider the following 90-residue polypeptide: U7-theraphotoxin-Hhn1a 5 (90 aa).

Residues Met-1–Ser-19 form the signal peptide. Positions Phe-20–Glu-50 are excised as a propeptide. Intrachain disulfides connect Cys-51–Cys-65, Cys-58–Cys-70, and Cys-64–Cys-81.

This sequence belongs to the neurotoxin 10 (Hwtx-1) family. 13 (Hntx-13) subfamily. Expressed by the venom gland.

Its subcellular location is the secreted. Functionally, ion channel inhibitor. In Cyriopagopus hainanus (Chinese bird spider), this protein is U7-theraphotoxin-Hhn1a 5.